The primary structure comprises 390 residues: MAALESFLYTSESVNEGHPDKICDQVSDAVLDACLEQDPDSKVACETCCKTGMVMVFGEITTKAKVDYEAIVRKVCKEIGFTSEDVGLDADKCKVLVHIEEQSPDIGQGVHGMGTKALEEIGAGDQGHMFGYATDETPELMPLTHVLATQLGYKLTEVRKNGVCPWLRPDGKTQVTVEYKREGGAMIPQRVHTILISTQHNPDVTNEKIREDLMEHVIKPVVPAKYLDDKTIFHLNPSGRFVIGGPHGDAGLTGRKIIIDTYGGWGAHGGGAFSGKDPTKVDRSGAYIARQAAKSVVASGLAKRCLVQVSYSIAVAEPLSVFVDTYGTGTMPDAEILKLIRKHFDFRPGLIGKNLDLKRGGNKRYQKTAAYGHFGRDDPDFTWETVKKLE.

Residue Glu12 coordinates Mg(2+). His18 serves as a coordination point for ATP. Residue Glu46 participates in K(+) binding. Positions 59 and 102 each coordinate L-methionine. ATP is bound by residues Asp170–Lys172, Ser238–Phe241, Asp249, Arg255–Lys256, Ala272, Lys276, and Lys280. Asp249 serves as a coordination point for L-methionine. L-methionine is bound at residue Lys280.

Belongs to the AdoMet synthase family. In terms of assembly, homotetramer. Requires Mn(2+) as cofactor. It depends on Mg(2+) as a cofactor. The cofactor is Co(2+). K(+) is required as a cofactor.

Its subcellular location is the cytoplasm. It carries out the reaction L-methionine + ATP + H2O = S-adenosyl-L-methionine + phosphate + diphosphate. The protein operates within amino-acid biosynthesis; S-adenosyl-L-methionine biosynthesis; S-adenosyl-L-methionine from L-methionine: step 1/1. In terms of biological role, catalyzes the formation of S-adenosylmethionine from methionine and ATP. The reaction comprises two steps that are both catalyzed by the same enzyme: formation of S-adenosylmethionine (AdoMet) and triphosphate, and subsequent hydrolysis of the triphosphate. This is S-adenosylmethionine synthase (METM) from Chlamydomonas reinhardtii (Chlamydomonas smithii).